Reading from the N-terminus, the 497-residue chain is GTPase-activating protein GYP8 (497 aa).

The Rab-GAP TBC domain maps to 69–281 (FVNNSLRKDC…QIFDMTISMQ (213 aa)).

The chain is GTPase-activating protein GYP8 (GYP8) from Saccharomyces cerevisiae (strain ATCC 204508 / S288c) (Baker's yeast).